The chain runs to 207 residues: Superoxide dismutase [Mn] (207 aa).

Mn(2+)-binding residues include His-28, His-76, Asp-160, and His-164.

The protein belongs to the iron/manganese superoxide dismutase family. Mn(2+) serves as cofactor.

It catalyses the reaction 2 superoxide + 2 H(+) = H2O2 + O2. Destroys superoxide anion radicals which are normally produced within the cells and which are toxic to biological systems. The polypeptide is Superoxide dismutase [Mn] (sodA) (Mycobacterium intracellulare (strain ATCC 13950 / DSM 43223 / JCM 6384 / NCTC 13025 / 3600)).